Here is a 385-residue protein sequence, read N- to C-terminus: WD repeat-containing protein RUP1 (385 aa).

WD repeat units follow at residues 69 to 108 (TGSD…ESRD), 119 to 160 (CTPA…PVSE), 163 to 205 (EHGG…TLEE), 210 to 250 (GGGA…DPLI), 254 to 292 (GHTK…RVVR), 298 to 337 (VNSR…PVWV), and 348 to 385 (SDRR…GKQS).

Interacts with UVR8. Interacts directly with DHU1.

The protein resides in the nucleus. Its subcellular location is the cytoplasm. It localises to the cytosol. Its function is as follows. Functions in association with RUP2 as repressor of UV-B-induced photomorphogenesis mediated by UVR8 and HY5, likely in coordination with DHU1. Plays a crucial negative feedback regulatory role downstream of UVR8-COP1 to inhibit UVR8 function, balance UV-B-specific responses and ensure normal plant growth. Is involved in the regulation of photoperiodic flowering and vegetative development. This is WD repeat-containing protein RUP1 from Arabidopsis thaliana (Mouse-ear cress).